A 420-amino-acid polypeptide reads, in one-letter code: MEDSESSTQAPAAHHGISLASSPVRALIRMRRKIRTLKKSRLQLDLTTGRPLDSAKASLRRQISTDRASLFKTTTYEKQQYFNFDTPTLEKLALNNQIRKKNRKKSRHVLYPGNVRKCLPVEQKSKAKRCLLLFIAIVCFQIFNAIENLDDNLQKYDLDGLEKTLQREVFGQRRAIDKLMDHLKDYLATHYHNKPLVLSFNGPSGVGKSHTGRLLAKHFRSVMDNDFVLQYYTMHNCPDENDVAKCQAEVSGMISEMISRAEIEEKIPVFIFDELEVMPVALLDVLHGYFQLNQSNEYLNAVYILISNIGGNEITKFVLQNSSKDFVNVPQELRHLVLTSLRKQHFLWDVAEIVPFTLLEKRHILDCFLDELLREGLYPDHSNIESLAGQLRYYTKENKEYSITGCKQVVAKVNLLQPYT.

A helical transmembrane segment spans residues 130–150; that stretch reads CLLLFIAIVCFQIFNAIENLD. 202 to 209 serves as a coordination point for ATP; that stretch reads GPSGVGKS.

It belongs to the ClpA/ClpB family. Torsin subfamily.

It is found in the membrane. This Xenopus tropicalis (Western clawed frog) protein is Torsin-4A (tor4a).